The sequence spans 1055 residues: Ubiquitin carboxyl-terminal hydrolase 25 (1055 aa).

A UBA-like domain is found at 14–57 (QKHQQTFLNQLREITGINDTQILQQALKDSNGNLELAVAFLTAK). Residues 77–102 (NDRYISVGSQADTNVIDLTGDDKDDL) are SUMO interaction domain (SIM). Serine 85 bears the Phosphoserine mark. Residues 89–95 (TNVIDLT) carry the Required for SUMO paralog-specific binding motif. 2 UIM domains span residues 97-116 (DDKDDLQRAIALSLAESNRA) and 123-140 (TDEEQAISRVLEASIAEN). Residue lysine 99 forms a Glycyl lysine isopeptide (Lys-Gly) (interchain with G-Cter in SUMO); alternate linkage. Residue lysine 99 forms a Glycyl lysine isopeptide (Lys-Gly) (interchain with G-Cter in ubiquitin); alternate linkage. Residues 169-657 (VGLKNVGNTC…SAYCLMYIND (489 aa)) form the USP domain. Cysteine 178 is a catalytic residue. Residues 464 to 507 (VCTSPVDDIDASSPPSGSIPSQTLPSTTEQQGALSSELPSTSPS) are disordered. The segment covering 476–496 (SPPSGSIPSQTLPSTTEQQGA) has biased composition (polar residues). Residues 497 to 507 (LSSELPSTSPS) show a composition bias toward low complexity. Positions 541 to 578 (TEEELSVLESCLHRWRTEIENDTRDLQESISRIHRTIE) form a coiled coil. Catalysis depends on residues histidine 599 and histidine 607. Positions 684–717 (DLRDFVEEDNQRFEKELEEWDAQLAQKALQEKLL) form a coiled coil. The segment at 727 to 749 (TSVTTAQAAGDPEYLEQPSRSDF) is disordered. Tyrosine 740 bears the Phosphotyrosine mark.

The protein belongs to the peptidase C19 family. In terms of assembly, homotetramer, inhibited form. Homodimer, active form. Interacts with ACTA1 (via its C-terminus); the interaction occurs for all isoforms but is strongest for isoform USP25m in muscle differentiating cells. Interacts (isoform USP25m only) with MYBPC1; the interaction prevents proteasomal degradation of MYBPC1. Interacts (isoform USP25m only) with FLNC (via filament repeats 17-18, 20-21 and 24). Interacts with GAPDH. Interacts with SUMO3; the interaction sumoylates efficiently USP25. Interacts with SUMO2; the interaction sumoylates efficiently USP25. Interacts with SUMO1; the interaction only weakly sumoylates USP25. Interacts with SYK; phosphorylates USP25 and regulates USP25 intracellular levels. Post-translationally, acetylated. Sumoylation impairs binding to and hydrolysis of ubiquitin chains. Sumoylated preferentially with SUMO2 or SUMO3. Desumoylated by SENP1. Polyubiquitinated by SMURF1 by promoting the 'Lys-48'-linkage leading to proteasomal degradation. In terms of processing, preferentially monoubiquitinated but can also be polyubiquitinated. Autodeubiquitinated. Ubiquitination activates the enzymatic activity either by preventing sumoylation or by allowing novel interactions. Post-translationally, phosphorylation in the C-terminal by SYK regulates USP25 cellular levels. As to expression, isoform USP25a is found in most adult and fetal tissues; expression is moderately high in testis, pancreas, kidney, skeletal muscle, liver, lung, placenta, heart, but very low in peripheral blood, colon, small intestine, ovary, prostate, thymus and spleen. Expressed in the brain, with high levels in the cerebral cortex. Isoform USP25b is found in all tissues except heart and skeletal muscle. Isoform USP25m is heart and skeletal muscle specific.

It is found in the cytoplasm. The protein localises to the nucleus. It catalyses the reaction Thiol-dependent hydrolysis of ester, thioester, amide, peptide and isopeptide bonds formed by the C-terminal Gly of ubiquitin (a 76-residue protein attached to proteins as an intracellular targeting signal).. Deubiquitinating enzyme that hydrolyzes ubiquitin moieties conjugated to substrates and thus, functions in various biological processes including inflammation and immune response. Modulates the Wnt/beta-catenin pathway by deubiquitinating and stabilizing tankyrases TNKS1 and TNKS2. Regulates KEAP1-NRF2 axis in the defense against oxidative assaults by deubiquitinating KEAP1 and protecting it from degradation leading to degradation of the NRF2 transcription factor that is responsible for mounting an anti-oxidation gene expression program. Positively regulates RNA virus-induced innate signaling by interacting with and deubiquitinating ERLIN1 and ERLIN2. In turn, restricts virus production by regulating cholesterol biosynthetic flux. Acts as a negative regulator of interleukin-17-mediated signaling and inflammation through the removal of 'Lys-63'-linked ubiquitination of TRAF5 and TRAF6. Prevents the ubiquitination and degradation of TRAF3 to reduce the phosphorylation levels of JNK and P38, the secretion of IL-1B and to induce endotoxin tolerance. In terms of biological role, the muscle-specific isoform (USP25m) may have a role in the regulation of muscular differentiation and function. The chain is Ubiquitin carboxyl-terminal hydrolase 25 (USP25) from Homo sapiens (Human).